Reading from the N-terminus, the 120-residue chain is Large ribosomal subunit protein uL18 (120 aa).

It belongs to the universal ribosomal protein uL18 family. Part of the 50S ribosomal subunit; part of the 5S rRNA/L5/L18/L25 subcomplex. Contacts the 5S and 23S rRNAs.

In terms of biological role, this is one of the proteins that bind and probably mediate the attachment of the 5S RNA into the large ribosomal subunit, where it forms part of the central protuberance. This Bradyrhizobium sp. (strain ORS 278) protein is Large ribosomal subunit protein uL18.